A 199-amino-acid polypeptide reads, in one-letter code: NADH-quinone oxidoreductase subunit C (199 aa).

This sequence belongs to the complex I 30 kDa subunit family. NDH-1 is composed of 14 different subunits. Subunits NuoB, C, D, E, F, and G constitute the peripheral sector of the complex.

The protein localises to the cell membrane. It carries out the reaction a quinone + NADH + 5 H(+)(in) = a quinol + NAD(+) + 4 H(+)(out). Its function is as follows. NDH-1 shuttles electrons from NADH, via FMN and iron-sulfur (Fe-S) centers, to quinones in the respiratory chain. The immediate electron acceptor for the enzyme in this species is believed to be ubiquinone. Couples the redox reaction to proton translocation (for every two electrons transferred, four hydrogen ions are translocated across the cytoplasmic membrane), and thus conserves the redox energy in a proton gradient. The chain is NADH-quinone oxidoreductase subunit C from Polynucleobacter asymbioticus (strain DSM 18221 / CIP 109841 / QLW-P1DMWA-1) (Polynucleobacter necessarius subsp. asymbioticus).